A 705-amino-acid polypeptide reads, in one-letter code: Dolichyl-diphosphooligosaccharide--protein glycosyltransferase subunit STT3A (705 aa).

Residues 1-17 are Cytoplasmic-facing; it reads MTKLGFLRLSYEKQDTL. Residues 18 to 38 form a helical membrane-spanning segment; the sequence is LKLLILSMAAVLSFSTRLFAV. Residues 39-119 are Lumenal-facing; it reads LRFESVIHEF…IDIRNVCVFL (81 aa). A DXD motif 1 motif is present at residues 47-49; the sequence is EFD. A Mn(2+)-binding site is contributed by aspartate 49. Residues 120–138 form a helical membrane-spanning segment; it reads APLFSSFTTIVTYHLTKEL. The Cytoplasmic portion of the chain corresponds to 139–140; sequence KD. A helical membrane pass occupies residues 141–158; the sequence is AGAGLLAAAMIAVVPGYI. The Lumenal segment spans residues 159 to 169; sequence SRSVAGSYDNE. Aspartate 167 and glutamate 169 together coordinate Mn(2+). The DXD motif 2 motif lies at 167–169; it reads DNE. Residues 170-189 form a helical membrane-spanning segment; that stretch reads GIAIFCMLLTYYMWIKAVKT. Topologically, residues 190 to 191 are cytoplasmic; it reads GS. The helical transmembrane segment at 192 to 206 threads the bilayer; it reads IYWAAKCALAYFYMV. Over 207–211 the chain is Lumenal; the sequence is SSWGG. Residues 212–228 traverse the membrane as a helical segment; that stretch reads YVFLINLIPLHVLVLML. Topologically, residues 229–233 are cytoplasmic; the sequence is TGRFS. A helical membrane pass occupies residues 234 to 259; it reads HRIYVAYCTVYCLGTILSMQISFVGF. Topologically, residues 260-267 are lumenal; the sequence is QPVLSSEH. The chain crosses the membrane as a helical span at residues 268 to 287; the sequence is MAAFGVFGLCQIHAFVDYLR. The Cytoplasmic segment spans residues 288 to 300; the sequence is SKLNPQQFEVLFR. Residues 301–321 traverse the membrane as a helical segment; that stretch reads SVISLVGFVLLTVGALLMLTG. Over 322-356 the chain is Lumenal; that stretch reads KISPWTGRFYSLLDPSYAKNNIPIIASVSEHQPTT. Positions 348–351 match the SVSE motif motif; it reads SVSE. The chain crosses the membrane as a helical span at residues 357–379; that stretch reads WSSYYFDLQLLVFMFPVGLYYCF. Over 380–385 the chain is Cytoplasmic; the sequence is SNLSDA. A helical membrane pass occupies residues 386–402; it reads RIFIIMYGVTSMYFSAV. Residues 403 to 406 lie on the Lumenal side of the membrane; sequence MVRL. Arginine 405 contributes to the dolichyl diphosphooligosaccharide binding site. Residues 407-428 traverse the membrane as a helical segment; sequence MLVLAPVMCILSGIGVSQVLST. Topologically, residues 429-453 are cytoplasmic; the sequence is YMKNLDISRPDKKSKKQQDSTYPIK. A helical transmembrane segment spans residues 454–473; sequence NEVASGMILVMAFFLITYTF. At 474–705 the chain is on the lumenal side; sequence HSTWVTSEAY…DLDNRGLSRT (232 aa). The segment at 525–527 is interacts with target acceptor peptide in protein substrate; sequence WWD. Residues 525–529 carry the WWDYG motif motif; the sequence is WWDYG. Tyrosine 530 is a dolichyl diphosphooligosaccharide binding site. N-linked (GlcNAc...) asparagine glycosylation is found at asparagine 537 and asparagine 544. A glycan (N-linked (GlcNAc...) (high mannose) asparagine) is linked at asparagine 548. The DK motif motif lies at 592–599; it reads DINKFLWM.

It belongs to the STT3 family. Component of the oligosaccharyltransferase (OST) complex. There are 2 OST complexes, OST-A and OST-B, which contain STT3A or STT3B as catalytic subunit, respectively. OST-A and OST-B contain common core subunits RPN1, RPN2, OST48, OST4, DAD1 and TMEM258, and OST-A contains DC2/OSTC and KRTCAP2/KCP2 specific accessory subunits. OST-A complex assembly occurs through the formation of 3 subcomplexes. Subcomplex 1 contains RPN1 and TMEM258, subcomplex 2 contains the OST-A-specific subunits STT3A, DC2/OSTC, and KCP2 as well as the core subunit OST4, and subcomplex 3 contains RPN2, DAD1, and OST48. The OST-A complex can form stable complexes with the Sec61 complex or with both the Sec61 and TRAP complexes. Requires Mg(2+) as cofactor. Mn(2+) is required as a cofactor.

Its subcellular location is the endoplasmic reticulum. The protein resides in the endoplasmic reticulum membrane. The enzyme catalyses a di-trans,poly-cis-dolichyl diphosphooligosaccharide + L-asparaginyl-[protein] = N(4)-(oligosaccharide-(1-&gt;4)-N-acetyl-beta-D-glucosaminyl-(1-&gt;4)-N-acetyl-beta-D-glucosaminyl)-L-asparaginyl-[protein] + a di-trans,poly-cis-dolichyl diphosphate + H(+). Its pathway is protein modification; protein glycosylation. Functionally, catalytic subunit of the oligosaccharyl transferase (OST) complex that catalyzes the initial transfer of a defined glycan (Glc(3)Man(9)GlcNAc(2) in eukaryotes) from the lipid carrier dolichol-pyrophosphate to an asparagine residue within an Asn-X-Ser/Thr consensus motif in nascent polypeptide chains, the first step in protein N-glycosylation. N-glycosylation occurs cotranslationally and the complex associates with the Sec61 complex at the channel-forming translocon complex that mediates protein translocation across the endoplasmic reticulum (ER). All subunits are required for a maximal enzyme activity. This subunit contains the active site and the acceptor peptide and donor lipid-linked oligosaccharide (LLO) binding pockets. STT3A is present in the majority of OST complexes and mediates cotranslational N-glycosylation of most sites on target proteins, while STT3B-containing complexes are required for efficient post-translational glycosylation and mediate glycosylation of sites that have been skipped by STT3A. STT3A-containing OST-A complex is also required to prevent hyperglycosylation of some target proteins by preventing glycosylation of facultative sites before folding of target proteins is completed. In Mus musculus (Mouse), this protein is Dolichyl-diphosphooligosaccharide--protein glycosyltransferase subunit STT3A.